The following is a 107-amino-acid chain: Small ribosomal subunit protein uS10c (107 aa).

This sequence belongs to the universal ribosomal protein uS10 family. In terms of assembly, part of the 30S ribosomal subunit.

The protein localises to the plastid. It is found in the chloroplast. Functionally, involved in the binding of tRNA to the ribosomes. The sequence is that of Small ribosomal subunit protein uS10c from Thalassiosira pseudonana (Marine diatom).